The chain runs to 269 residues: Protein TORNADO 2 (269 aa).

The Cytoplasmic portion of the chain corresponds to 1-10; it reads MPLSNNVIGC. The helical transmembrane segment at 11-31 threads the bilayer; sequence INFITVLLSIPVIGAGIWLAI. Residues 32–44 are Extracellular-facing; sequence GTVNSCVKLLQWP. A helical membrane pass occupies residues 45–65; the sequence is VIILGVLILLVGLAGFIGGFW. Residues 66–71 are Cytoplasmic-facing; sequence RITWLL. The chain crosses the membrane as a helical span at residues 72 to 92; it reads VVYLIAMLILIVLLGCLVGFI. Over 93–231 the chain is Extracellular; the sequence is YMVTIRGSGH…NIKVDWLKAD (139 aa). A glycan (N-linked (GlcNAc...) asparagine) is linked at Asn-200. The chain crosses the membrane as a helical span at residues 232–252; the sequence is IFLLLALIGLIIVYIIGCCAF. The Cytoplasmic segment spans residues 253-269; sequence RNAETEDIFRKYKQGYT.

The protein belongs to the tetraspanin (TM4SF) family. As to expression, expressed in seedlings, roots, leaves, stems, apex, siliques and flowers. Present in ovules, prominently in nucellus and integuments.

It is found in the membrane. Involved in the basipetal transport of auxin (IAA) that modulates growth and organs organization, as well as cell differentiation. Regulates shoot apical meristem (SAM) organization in the peripheral zone. Required for initial meristematic divisions in the epidermal/lateral root cap leading to the formation of epidermal cells and a clone of lateral root cap cells, as well as for the maintenance of the radial pattern of cell specification in the root, thus regulating the distinction between the lateral root cap and epidermis. Together with WIH peptides, promotes megasporogenesis. This is Protein TORNADO 2 (TRN2) from Arabidopsis thaliana (Mouse-ear cress).